A 116-amino-acid polypeptide reads, in one-letter code: Large ribosomal subunit protein bL19 (116 aa).

It belongs to the bacterial ribosomal protein bL19 family.

Functionally, this protein is located at the 30S-50S ribosomal subunit interface and may play a role in the structure and function of the aminoacyl-tRNA binding site. The protein is Large ribosomal subunit protein bL19 of Haemophilus influenzae (strain 86-028NP).